We begin with the raw amino-acid sequence, 359 residues long: tRNA-specific 2-thiouridylase MnmA (359 aa).

ATP is bound by residues 7–14 (AMSGGVDS) and methionine 33. Cysteine 101 functions as the Nucleophile in the catalytic mechanism. Cysteines 101 and 198 form a disulfide. Glycine 125 contacts ATP. The interval 148-150 (KDQ) is interaction with tRNA. Cysteine 198 serves as the catalytic Cysteine persulfide intermediate.

The protein belongs to the MnmA/TRMU family.

It localises to the cytoplasm. The enzyme catalyses S-sulfanyl-L-cysteinyl-[protein] + uridine(34) in tRNA + AH2 + ATP = 2-thiouridine(34) in tRNA + L-cysteinyl-[protein] + A + AMP + diphosphate + H(+). In terms of biological role, catalyzes the 2-thiolation of uridine at the wobble position (U34) of tRNA, leading to the formation of s(2)U34. In Chloroflexus aggregans (strain MD-66 / DSM 9485), this protein is tRNA-specific 2-thiouridylase MnmA.